The following is a 122-amino-acid chain: Ribosome-binding factor A (122 aa).

The protein belongs to the RbfA family. Monomer. Binds 30S ribosomal subunits, but not 50S ribosomal subunits or 70S ribosomes.

The protein resides in the cytoplasm. One of several proteins that assist in the late maturation steps of the functional core of the 30S ribosomal subunit. Associates with free 30S ribosomal subunits (but not with 30S subunits that are part of 70S ribosomes or polysomes). Required for efficient processing of 16S rRNA. May interact with the 5'-terminal helix region of 16S rRNA. This chain is Ribosome-binding factor A, found in Polynucleobacter necessarius subsp. necessarius (strain STIR1).